Here is a 638-residue protein sequence, read N- to C-terminus: Threonine--tRNA ligase (638 aa).

The region spanning 1-61 (MPIITLPDGT…DYDAEIKIIT (61 aa)) is the TGS domain. A catalytic region spans residues 242–533 (DHRKIGKKMD…LIENYAGNFP (292 aa)). Positions 333, 384, and 510 each coordinate Zn(2+).

The protein belongs to the class-II aminoacyl-tRNA synthetase family. Homodimer. Zn(2+) serves as cofactor.

The protein resides in the cytoplasm. It catalyses the reaction tRNA(Thr) + L-threonine + ATP = L-threonyl-tRNA(Thr) + AMP + diphosphate + H(+). In terms of biological role, catalyzes the attachment of threonine to tRNA(Thr) in a two-step reaction: L-threonine is first activated by ATP to form Thr-AMP and then transferred to the acceptor end of tRNA(Thr). Also edits incorrectly charged L-seryl-tRNA(Thr). This Prochlorococcus marinus (strain MIT 9211) protein is Threonine--tRNA ligase.